A 425-amino-acid chain; its full sequence is Inositol hexakisphosphate kinase 2 (425 aa).

ATP contacts are provided by residues 206–208 (ENL) and Asp219. Substrate contacts are provided by residues 215 to 223 (PCVLDLKMG), Lys221, and 235 to 242 (KAANQIRK). ATP is bound at residue Asp382. His385 is a substrate binding site.

Belongs to the inositol phosphokinase (IPK) family. Highly expressed in small intestine.

The protein resides in the nucleus. It catalyses the reaction 1D-myo-inositol hexakisphosphate + ATP = 5-diphospho-1D-myo-inositol 1,2,3,4,6-pentakisphosphate + ADP. The protein operates within phospholipid metabolism; phosphatidylinositol metabolism. In terms of biological role, converts inositol hexakisphosphate (InsP6) to diphosphoinositol pentakisphosphate (InsP7/PP-InsP5). The polypeptide is Inositol hexakisphosphate kinase 2 (Ip6k2) (Rattus norvegicus (Rat)).